We begin with the raw amino-acid sequence, 593 residues long: ATPase family AAA domain-containing protein 3-B (593 aa).

Disordered stretches follow at residues 1–64 (MSWL…LDQS), 109–129 (EEKRKTLNEETKQHQARAQYQ), and 145–164 (QLQNEENLRRQEESVQKQEA). The Mitochondrial intermembrane segment spans residues 1 to 242 (MSWLFGLNRG…FRTFISDWDK (242 aa)). Residues 12–27 (PEPPGVPGFPEPPSPP) are compositionally biased toward pro residues. 4 stretches are compositionally biased toward basic and acidic residues: residues 33–44 (GGDKNRPKDKWS), 53–64 (RAAKAARELDQS), 109–121 (EEKRKTLNEETKQ), and 150–164 (ENLRRQEESVQKQEA). A coiled-coil region spans residues 51–215 (LERAAKAARE…QIRLKAAEHR (165 aa)). The chain crosses the membrane as a helical span at residues 243–260 (VTATVAGLTLLAVGVYTA). Over 261-593 (KNGTGVAGRY…LQPLLEGTPV (333 aa)) the chain is Mitochondrial matrix. 348–355 (GPPGTGKT) contributes to the ATP binding site. A compositionally biased stretch (basic and acidic residues) spans 570–580 (AEGKESTKEIG). A disordered region spans residues 570–593 (AEGKESTKEIGKNPLQPLLEGTPV).

Belongs to the AAA ATPase family. Can form homooligomers. Homodimer formation at the N-terminus may be regulated by ATP and is required for the interaction with the inner surface of the mitochondrial outer membrane and correct mitochondrial homeostasis.

It localises to the mitochondrion inner membrane. It is found in the mitochondrion matrix. The protein localises to the mitochondrion nucleoid. The catalysed reaction is ATP + H2O = ADP + phosphate + H(+). Its function is as follows. Essential for mitochondrial network organization, mitochondrial metabolism and cell growth at organism and cellular level. May play an important role in mitochondrial protein synthesis. May also participate in mitochondrial DNA replication. May bind to mitochondrial DNA D-loops and contribute to nucleoid stability. Required for enhanced channeling of cholesterol for hormone-dependent steroidogenesis. Involved in mitochondrial-mediated antiviral innate immunity. Required to protect mitochondria from the PERK-mediated unfolded protein response: specifically inhibits the activity of EIF2AK3/PERK at mitochondria-endoplasmic reticulum contact sites, thereby providing a safe haven for mitochondrial protein translation during endoplasmic reticulum stress. Ability to inhibit EIF2AK3/PERK is independent of its ATPase activity. Also involved in the mitochondrial DNA damage response by promoting signaling between damaged genomes and the mitochondrial membrane, leading to activation of the integrated stress response (ISR). The protein is ATPase family AAA domain-containing protein 3-B (atad3-b) of Xenopus laevis (African clawed frog).